The sequence spans 918 residues: Whirlin (918 aa).

The region spanning 141–224 is the PDZ 1 domain; the sequence is LVSLRRAKAH…LVLSVYSAGR (84 aa). Residues 240 to 266 are disordered; sequence PQGRSTSPPSSLPQPHGSTLRQREDDR. The PDZ 2 domain maps to 280-362; it reads KVNLVLGDGR…LILTVKDVGR (83 aa). 3 disordered regions span residues 387–407, 503–538, and 560–824; these read NSAG…GFYK, SMKA…TSTT, and EGTG…LEPT. Residues 522–538 show a composition bias toward low complexity; the sequence is SYSDTGSSTGSHGTSTT. Positions 563–572 are enriched in polar residues; that stretch reads GETTQGSTNA. Composition is skewed to pro residues over residues 591-600 and 638-649; these read IKPPPPPPPL and RSPPPGTAPTPG. Positions 654-672 are enriched in polar residues; sequence QDSPSSPIYASISHANPSS. At serine 696 the chain carries Phosphoserine. Composition is skewed to polar residues over residues 754-773 and 783-798; these read QTRT…TLSE and EAST…SAKN. Over residues 800 to 811 the composition is skewed to basic and acidic residues; that stretch reads NGKEQPRTERTA. Residues 827–910 form the PDZ 3 domain; the sequence is LVRVRKSAAT…TKERDYIDFL (84 aa).

Forms homooligomers. Interacts (via C-terminal PDZ domain) with MYO15A; this interaction is necessary for localization of WHRN to stereocilia tips. Interacts (via C-terminal PDZ domain) with MPP1/p55. Interacts with LRRC4C/NGL1. Interacts with MYO7A. Interacts with RPGR. Interacts with EPS8. Interacts with CASK. Interacts with CIB2. Component of USH2 complex, composed of ADGRV1, PDZD7, USH2A and WHRN. Interacts (via PDZ domains) with PDZD7; the interaction is direct. Interacts (via N-terminal PDZ domain) with USH2A (via cytoplasmic region). Interacts with ADGRV1/MASS1 (via cytoplasmic region). As to expression, expressed in the retina. Colocalizes with RPGR in the photoreceptor connecting cilium, a thin bridge linking the cell body and the light-sensing outer segment (at protein level). Detected in the inner ear throughout development from embryonic day 12 to 20 days after birth. Displays a dynamic pattern of expression after birth, demonstrating an ordered appearance and fade-out across stereocilia rows. Isoforms 5, 6, 7 and 8 are not detected in the retina.

It localises to the cytoplasm. It is found in the cell projection. The protein resides in the stereocilium. The protein localises to the growth cone. Its subcellular location is the photoreceptor inner segment. It localises to the synapse. Involved in hearing and vision as member of the USH2 complex. Necessary for elongation and maintenance of inner and outer hair cell stereocilia in the organ of Corti in the inner ear. Involved in the maintenance of the hair bundle ankle region, which connects stereocilia in cochlear hair cells of the inner ear. In retina photoreceptors, required for the maintenance of periciliary membrane complex that seems to play a role in regulating intracellular protein transport. This is Whirlin from Mus musculus (Mouse).